The chain runs to 283 residues: MEMO1 family protein DKAM_1357 (283 aa).

This sequence belongs to the MEMO1 family.

The sequence is that of MEMO1 family protein DKAM_1357 from Desulfurococcus amylolyticus (strain DSM 18924 / JCM 16383 / VKM B-2413 / 1221n) (Desulfurococcus kamchatkensis).